We begin with the raw amino-acid sequence, 128 residues long: MTEADVNPKAYPLADAHLTKKLLDLVQQSCNYKQLRKGANEATKTLNRGISEFIVMAADAEPLEIILHLPLLCEDKNVPYVFVRSKQALGRACGVSRPVIACSVTIKEGSQLKQQIQSIQQSIERLLV.

Position 1 is an N-acetylmethionine (Met-1). At Thr-2 the chain carries N-acetylthreonine; in NHP2-like protein 1, N-terminally processed. Residue Lys-21 is modified to N6-acetyllysine. An interaction with U4 snRNA and U4atac snRNA region spans residues 36–48 (RKGANEATKTLNR). Positions 96-128 (SRPVIACSVTIKEGSQLKQQIQSIQQSIERLLV) are important for U4 snRNA-binding. Residue Ser-122 is modified to Phosphoserine.

It belongs to the eukaryotic ribosomal protein eL8 family. As to quaternary structure, identified in the spliceosome B complex. Component of the U4/U6-U5 tri-snRNP complex composed of the U4, U6 and U5 snRNAs and at least PRPF3, PRPF4, PRPF6, PRPF8, PRPF31, SNRNP200, TXNL4A, WDR57, SNRNP40, DDX23, CD2BP2, PPIH, NHP2L1, EFTUD2, SART1 and USP39. Interacts with RAD17 and PRPF31. The complex formed by SNU13 and PRPF31 binds U4 snRNA. The complex formed by SNU13 and PRPF31 also binds U4atac snRNA, a characteristic component of specific, less abundant spliceosomal complexes. Part of the small subunit (SSU) processome, composed of more than 70 proteins and the RNA chaperone small nucleolar RNA (snoRNA) U3. Core component of box C/D small nucleolar ribonucleoprotein (snoRNP) particles; the core proteins SNU13, NOP56, NOP58 and FBL or FBLL1 assemble stepwise onto the snoRNA.

It is found in the nucleus. It localises to the nucleolus. Part of the small subunit (SSU) processome, first precursor of the small eukaryotic ribosomal subunit. During the assembly of the SSU processome in the nucleolus, many ribosome biogenesis factors, an RNA chaperone and ribosomal proteins associate with the nascent pre-rRNA and work in concert to generate RNA folding, modifications, rearrangements and cleavage as well as targeted degradation of pre-ribosomal RNA by the RNA exosome. Involved in pre-mRNA splicing as component of the spliceosome. Binds to the 5'-stem-loop of U4 snRNA and thereby contributes to spliceosome assembly. The protein undergoes a conformational change upon RNA-binding. Core component of box C/D small nucleolar ribonucleoprotein (snoRNP) complexes that function in methylation of multiple sites on ribosomal RNAs (rRNAs) and messenger RNAs (mRNAs). The sequence is that of NHP2-like protein 1 from Bos taurus (Bovine).